The primary structure comprises 513 residues: Interferon alpha/beta receptor 2 (513 aa).

The N-terminal stretch at 1–21 is a signal peptide; the sequence is MRSRCTVSAVGLLSLCLVVSA. Topologically, residues 22 to 242 are extracellular; it reads SLETITPSAF…GQESGLSESA (221 aa). 2 cysteine pairs are disulfide-bonded: C39/C123 and C85/C93. N42, N58, N65, N78, and N84 each carry an N-linked (GlcNAc...) asparagine glycan. N-linked (GlcNAc...) asparagine glycosylation is found at N149, N191, and N195. An intrachain disulfide couples C210 to C227. The helical transmembrane segment at 243–263 threads the bilayer; the sequence is IVGITTSCLVVMVFVSTIVML. At 264 to 513 the chain is on the cytoplasmic side; that stretch reads KRIGYICLKD…ADVGDGYIMR (250 aa). The tract at residues 334-402 is disordered; sequence GYTMHGLTGK…DPTGPYERRK (69 aa). Y335 carries the post-translational modification Phosphotyrosine. The span at 344-354 shows a compositional bias: polar residues; sequence PLQQTSDTSAS. Positions 377–389 are enriched in low complexity; the sequence is GAEPELPTEAGAG. Phosphoserine is present on S403. The segment at 421-444 is mediates interaction with STAT2 (and required for the recruitment of USP18); sequence GDNIIFNVNLNSVFLRVLHDEDAS. A phosphoserine mark is found at S448 and S465. Positions 458–513 are disordered; that stretch reads EGPQRTESDLRIAGGDRTQPPLPSLPSQDLWTEDGSSEKSDTSDSDADVGDGYIMR. At Y510 the chain carries Phosphotyrosine.

Belongs to the type II cytokine receptor family. As to quaternary structure, heterodimer with IFNAR1; forming the receptor for type I interferon. Interacts with the transcriptional factors STAT1 and STAT2. Interacts with JAK1. Interacts with USP18; indirectly via STAT2, it negatively regulates the assembly of the ternary interferon-IFNAR1-IFNAR2 complex and therefore type I interferon signaling. In terms of processing, phosphorylated on tyrosine residues upon interferon binding. Phosphorylation at Tyr-335 or Tyr-510 are sufficient to mediate interferon dependent activation of STAT1, STAT2 and STAT3 leading to antiproliferative effects on many different cell types. As to expression, widely expressed. Detected in liver, testis, kidney, salivary gland, thymus, brain, lung and placenta. Isoform 1, isoform 2 and isoform 3 are expressed in brain.

The protein resides in the cell membrane. It is found in the secreted. Its function is as follows. Together with IFNAR1, forms the heterodimeric receptor for type I interferons (including interferons alpha, beta, epsilon, omega and kappa). Type I interferon binding activates the JAK-STAT signaling cascade, resulting in transcriptional activation or repression of interferon-regulated genes that encode the effectors of the interferon response. Mechanistically, type I interferon-binding brings the IFNAR1 and IFNAR2 subunits into close proximity with one another, driving their associated Janus kinases (JAKs) (TYK2 bound to IFNAR1 and JAK1 bound to IFNAR2) to cross-phosphorylate one another. The activated kinases phosphorylate specific tyrosine residues on the intracellular domains of IFNAR1 and IFNAR2, forming docking sites for the STAT transcription factors (STAT1, STAT2 and STAT). STAT proteins are then phosphorylated by the JAKs, promoting their translocation into the nucleus to regulate expression of interferon-regulated genes. Functionally, may be potent inhibitors of type I IFN receptor activity. The protein is Interferon alpha/beta receptor 2 (Ifnar2) of Mus musculus (Mouse).